The following is a 309-amino-acid chain: Tagatose-6-phosphate kinase (309 aa).

It belongs to the carbohydrate kinase PfkB family. LacC subfamily.

The enzyme catalyses D-tagatofuranose 6-phosphate + ATP = D-tagatofuranose 1,6-bisphosphate + ADP + H(+). It participates in carbohydrate metabolism; D-tagatose 6-phosphate degradation; D-glyceraldehyde 3-phosphate and glycerone phosphate from D-tagatose 6-phosphate: step 1/2. The protein is Tagatose-6-phosphate kinase of Streptococcus pyogenes serotype M2 (strain MGAS10270).